We begin with the raw amino-acid sequence, 220 residues long: Splicing factor U2AF 26 kDa subunit (220 aa).

Alanine 2 carries the N-acetylalanine modification. Residues 12 to 40 form a C3H1-type 1 zinc finger; sequence EKDKVNCSFYFKIGVCRHGDRCSRLHNKP. The RRM domain occupies 65–147; it reads SHCHVSDVEV…QAVHGELSPV (83 aa). The segment at 149–176 adopts a C3H1-type 2 zinc-finger fold; it reads DFRESCCRQYEMGECTRGGFCNFMHLRP. The disordered stretch occupies residues 185–220; that stretch reads LYGRGPRRRSPPRFHTGHHPRERNHRCSPDHWHGRF. A compositionally biased stretch (basic residues) spans 189–208; it reads GPRRRSPPRFHTGHHPRERN. Basic and acidic residues predominate over residues 209–220; that stretch reads HRCSPDHWHGRF.

This sequence belongs to the splicing factor SR family. As to quaternary structure, interacts with GFI1, U2AF2 and C1QBP. Isoform 2 is widely expressed. Isoform 3 is highly expressed in heart, brain and lung, lower expressed in thymus and much lower expressed in peripheral blood leukocytes.

The protein resides in the nucleus. The protein localises to the nucleus speckle. Its subcellular location is the cytoplasm. In terms of biological role, RNA-binding protein that function as a pre-mRNA splicing factor. Plays a critical role in both constitutive and enhancer-dependent splicing by mediating protein-protein interactions and protein-RNA interactions required for accurate 3'-splice site selection. Acts by enhancing the binding of U2AF2 to weak pyrimidine tracts. Also participates in the regulation of alternative pre-mRNA splicing. Activates exon 5 skipping of PTPRC during T-cell activation; an event reversed by GFI1. Binds to RNA at the AG dinucleotide at the 3'-splice site. Shows a preference for AGC or AGA. In Homo sapiens (Human), this protein is Splicing factor U2AF 26 kDa subunit (U2AF1L4).